The following is a 480-amino-acid chain: UDP-N-acetylmuramate--L-alanine ligase (480 aa).

115-121 (GTHGKTT) is an ATP binding site.

Belongs to the MurCDEF family.

Its subcellular location is the cytoplasm. The catalysed reaction is UDP-N-acetyl-alpha-D-muramate + L-alanine + ATP = UDP-N-acetyl-alpha-D-muramoyl-L-alanine + ADP + phosphate + H(+). It participates in cell wall biogenesis; peptidoglycan biosynthesis. Functionally, cell wall formation. This is UDP-N-acetylmuramate--L-alanine ligase from Gluconacetobacter diazotrophicus (strain ATCC 49037 / DSM 5601 / CCUG 37298 / CIP 103539 / LMG 7603 / PAl5).